The chain runs to 259 residues: Thiazole synthase (259 aa).

The Schiff-base intermediate with DXP role is filled by lysine 98. 1-deoxy-D-xylulose 5-phosphate-binding positions include glycine 159, 185-186, and 207-208; these read AG and NS.

It belongs to the ThiG family. Homotetramer. Forms heterodimers with either ThiH or ThiS.

The protein resides in the cytoplasm. The enzyme catalyses [ThiS sulfur-carrier protein]-C-terminal-Gly-aminoethanethioate + 2-iminoacetate + 1-deoxy-D-xylulose 5-phosphate = [ThiS sulfur-carrier protein]-C-terminal Gly-Gly + 2-[(2R,5Z)-2-carboxy-4-methylthiazol-5(2H)-ylidene]ethyl phosphate + 2 H2O + H(+). It participates in cofactor biosynthesis; thiamine diphosphate biosynthesis. Functionally, catalyzes the rearrangement of 1-deoxy-D-xylulose 5-phosphate (DXP) to produce the thiazole phosphate moiety of thiamine. Sulfur is provided by the thiocarboxylate moiety of the carrier protein ThiS. In vitro, sulfur can be provided by H(2)S. In Chlorobium limicola (strain DSM 245 / NBRC 103803 / 6330), this protein is Thiazole synthase.